Here is a 626-residue protein sequence, read N- to C-terminus: Conserved oligomeric Golgi complex subunit 8 (626 aa).

The span at 580 to 598 shows a compositional bias: pro residues; that stretch reads PAPAPALPPNAPSPEPVTP. Residues 580–626 form a disordered region; it reads PAPAPALPPNAPSPEPVTPVTPAVPDAGQEEVESAGPPQPDEPSAGI.

Belongs to the COG8 family. As to quaternary structure, component of the conserved oligomeric Golgi complex which is composed of eight different subunits and is required for normal Golgi morphology and localization.

Its subcellular location is the golgi apparatus membrane. Required for normal Golgi function. This is Conserved oligomeric Golgi complex subunit 8 (COG8) from Bos taurus (Bovine).